The following is a 262-amino-acid chain: Ribosomal RNA small subunit methyltransferase A (262 aa).

6 residues coordinate S-adenosyl-L-methionine: N13, L15, G40, E61, D85, and N104.

It belongs to the class I-like SAM-binding methyltransferase superfamily. rRNA adenine N(6)-methyltransferase family. RsmA subfamily.

The protein localises to the cytoplasm. It carries out the reaction adenosine(1518)/adenosine(1519) in 16S rRNA + 4 S-adenosyl-L-methionine = N(6)-dimethyladenosine(1518)/N(6)-dimethyladenosine(1519) in 16S rRNA + 4 S-adenosyl-L-homocysteine + 4 H(+). Specifically dimethylates two adjacent adenosines (A1518 and A1519) in the loop of a conserved hairpin near the 3'-end of 16S rRNA in the 30S particle. May play a critical role in biogenesis of 30S subunits. The polypeptide is Ribosomal RNA small subunit methyltransferase A (Chromobacterium violaceum (strain ATCC 12472 / DSM 30191 / JCM 1249 / CCUG 213 / NBRC 12614 / NCIMB 9131 / NCTC 9757 / MK)).